A 304-amino-acid polypeptide reads, in one-letter code: Glutaminase (304 aa).

The substrate site is built by Ser63, Asn114, Glu158, Asn165, Tyr189, Tyr240, and Val258.

This sequence belongs to the glutaminase family. As to quaternary structure, homotetramer.

It catalyses the reaction L-glutamine + H2O = L-glutamate + NH4(+). The polypeptide is Glutaminase (Shewanella amazonensis (strain ATCC BAA-1098 / SB2B)).